We begin with the raw amino-acid sequence, 814 residues long: Protein kintoun (814 aa).

Low complexity predominate over residues 234–246 (AANTARSPASPAP). 2 disordered regions span residues 234–259 (AANTARSPASPAPEAVQRPEPTEPRC) and 357–490 (ARQE…MGDP). The segment covering 388 to 404 (AAREESADGTGADHGEK) has biased composition (basic and acidic residues). A phosphoserine mark is found at serine 444 and serine 618. The interval 654-686 (AGLQGKGKGVREGCPLSEAEAADQSATSPAASD) is disordered. A compositionally biased stretch (low complexity) spans 675 to 686 (ADQSATSPAASD).

The protein belongs to the PIH1 family. Kintoun subfamily. Interacts with DNAI2 and HSPA1A. Interacts with CFAP300. Interacts with DNAAF4. Interacts with DNAAF6/PIH1D3. Expressed in nearly all organs of adult, with higher expression in tissues known to have motile cilia and flagella, such as brain and testis.

The protein localises to the cytoplasm. It is found in the dynein axonemal particle. Required for cytoplasmic pre-assembly of axonemal dyneins, thereby playing a central role in motility in cilia and flagella. Involved in pre-assembly of dynein arm complexes in the cytoplasm before intraflagellar transport loads them for the ciliary compartment. This is Protein kintoun from Mus musculus (Mouse).